Consider the following 414-residue polypeptide: MALISLAIDYKKSPIEVRSEFALSGLDVSMLYKSILAIDNVVHAVILSTCNRTEVYLEITDLRVVDDILAWWQSYVRNPEFKIRDYFKLRQGTEVIMHLMKLACGLESMVLGEPQILGQVKDSYTLSKKNHAIGKELDRVFQKVFATAKKVRSETRIGHCPVSVAFSAITLAKKQLDNISTKNVLIIGAGQTGELLFRHVTALNPKHIMLANRTIEKAEKITSTFNNASAYYLSDLPKLIKKADIIIAAVNVTEYIVKCEDVGEKSRVFIDISIPQALDPKLGDLEQNAYYCVDDINTVIEGNKDKRKHESSRAQKIIVKSLEDYLEKEKAIISNSAIKELFQKADGLVDLSLEKSLAKIRNGKDPEEVLKRFAYEIKKKVLHYPVVGMKEASKQGRSDCLVCMKRMFGLNVEK.

Residues Thr49–Arg52, Ser108, Glu113–Gln115, and Gln119 each bind substrate. The Nucleophile role is filled by Cys50. Residue Gly188–Gly193 participates in NADP(+) binding.

This sequence belongs to the glutamyl-tRNA reductase family. In terms of assembly, homodimer.

The catalysed reaction is (S)-4-amino-5-oxopentanoate + tRNA(Glu) + NADP(+) = L-glutamyl-tRNA(Glu) + NADPH + H(+). It functions in the pathway porphyrin-containing compound metabolism; protoporphyrin-IX biosynthesis; 5-aminolevulinate from L-glutamyl-tRNA(Glu): step 1/2. Its function is as follows. Catalyzes the NADPH-dependent reduction of glutamyl-tRNA(Glu) to glutamate 1-semialdehyde (GSA). This Francisella philomiragia subsp. philomiragia (strain ATCC 25017 / CCUG 19701 / FSC 153 / O#319-036) protein is Glutamyl-tRNA reductase.